The chain runs to 896 residues: Glutamate receptor 2.4 (896 aa).

Positions 1-24 (MKRHLNDVVLVFLVFIFGVKLGKG) are cleaved as a signal peptide. At 25-565 (QNTTIQVINV…SSLIFFKPLT (541 aa)) the chain is on the extracellular side. Asn-26, Asn-46, Asn-53, Asn-204, Asn-267, Asn-331, Asn-341, and Asn-527 each carry an N-linked (GlcNAc...) asparagine glycan. The helical transmembrane segment at 566 to 586 (PGLWGMTLGSFFVVGFVVWIL) threads the bilayer. Residues 587 to 595 (EHRVNSEFT) lie on the Cytoplasmic side of the membrane. Residues 596–616 (GPPQYQISTMFWFAFSIMVFA) form a helical membrane-spanning segment. Topologically, residues 617–620 (PRER) are cytoplasmic. Residues 621 to 641 (VMSFTARVVVITWYFIVLVLT) form a helical membrane-spanning segment. At 642 to 815 (QSYTASLSSL…VSFRKLSLDS (174 aa)) the chain is on the extracellular side. A helical transmembrane segment spans residues 816-836 (FLLLFVAAATVCTLALLKFVI). At 837-896 (CFLIQNRIILNDEFYRGKRMKEMWLKFMESDGESYISRVRSTCPQVLIQPREEDIDPING) the chain is on the cytoplasmic side.

It belongs to the glutamate-gated ion channel (TC 1.A.10.1) family. In terms of assembly, may form heteromers. In terms of tissue distribution, expressed predominantly in roots.

The protein localises to the membrane. Its function is as follows. Glutamate-gated receptor that probably acts as a non-selective cation channel. May be involved in light-signal transduction and calcium homeostasis via the regulation of calcium influx into cells. The protein is Glutamate receptor 2.4 (GLR2.4) of Arabidopsis thaliana (Mouse-ear cress).